A 545-amino-acid polypeptide reads, in one-letter code: CTP synthase (545 aa).

The amidoligase domain stretch occupies residues 1-266 (MTTNYIFVTG…DDLVCARFGI (266 aa)). S14 provides a ligand contact to CTP. Residue S14 participates in UTP binding. ATP contacts are provided by residues 15–20 (SLGKGI) and D72. D72 and E140 together coordinate Mg(2+). CTP contacts are provided by residues 147–149 (DIE), 187–192 (KTKPTQ), and K223. Residues 187 to 192 (KTKPTQ) and K223 each bind UTP. 239-241 (KDV) serves as a coordination point for ATP. The 252-residue stretch at 291–542 (TIGMVGKYTE…VKAAGQFQRG (252 aa)) folds into the Glutamine amidotransferase type-1 domain. An L-glutamine-binding site is contributed by G352. Catalysis depends on C379, which acts as the Nucleophile; for glutamine hydrolysis. Residues 380 to 383 (LGMQ), E403, and R470 contribute to the L-glutamine site. Catalysis depends on residues H515 and E517.

Belongs to the CTP synthase family. As to quaternary structure, homotetramer.

The enzyme catalyses UTP + L-glutamine + ATP + H2O = CTP + L-glutamate + ADP + phosphate + 2 H(+). The catalysed reaction is L-glutamine + H2O = L-glutamate + NH4(+). It catalyses the reaction UTP + NH4(+) + ATP = CTP + ADP + phosphate + 2 H(+). Its pathway is pyrimidine metabolism; CTP biosynthesis via de novo pathway; CTP from UDP: step 2/2. With respect to regulation, allosterically activated by GTP, when glutamine is the substrate; GTP has no effect on the reaction when ammonia is the substrate. The allosteric effector GTP functions by stabilizing the protein conformation that binds the tetrahedral intermediate(s) formed during glutamine hydrolysis. Inhibited by the product CTP, via allosteric rather than competitive inhibition. In terms of biological role, catalyzes the ATP-dependent amination of UTP to CTP with either L-glutamine or ammonia as the source of nitrogen. Regulates intracellular CTP levels through interactions with the four ribonucleotide triphosphates. The polypeptide is CTP synthase (Vibrio cholerae serotype O1 (strain ATCC 39541 / Classical Ogawa 395 / O395)).